A 545-amino-acid chain; its full sequence is MTEPFTPPHRLSAWSTLENHAARLRTMRIAELFEHDAARFATLSFGHRGLLLDLSKQSIDAPALAALVDLAGQARLPDGIEALFAGEHLNFTEDRAVLHMALRGACAAPLEDAATLAQSQQRMRAFTVALRSGTMTGATGKPIRLVVNLGIGGSDLGPRMAAQALVPTGLRATPEVRFVANIDRRELDEALADADPASTLFVVSSKSFATAETLANAQAARAWLQAGLGAGCDPALHFTAVSNATDAAAAFGIPAERVFPLPEWVGGRYSVWSTIGLPLMIAIGASEFDAFLAGARAMDEHFRTAPPGENLPVLMGLAGLWNTDFLGIESLALLPYAHGLRSFAAWLQQLEMESNGKRCLRDGSGSVIHTSPIVWGGVGTVGQHAFHQLFYQGTRRVALDFIVPVAAADDVSQRSLVENAFAQSAALMSGRDLDTALASLRAKGLAESEAAVLAPHLVCPGNQPSTTVLLPALDAFSLGQLMALYEHKVFVQGWIWGINSFDQYGVELGKEMARSLSAGSGENHDASTAGLMAAAEAMRRTPDRS.

The Proton donor role is filled by E353. Catalysis depends on residues H384 and K510.

Belongs to the GPI family.

Its subcellular location is the cytoplasm. It catalyses the reaction alpha-D-glucose 6-phosphate = beta-D-fructose 6-phosphate. It participates in carbohydrate biosynthesis; gluconeogenesis. The protein operates within carbohydrate degradation; glycolysis; D-glyceraldehyde 3-phosphate and glycerone phosphate from D-glucose: step 2/4. Functionally, catalyzes the reversible isomerization of glucose-6-phosphate to fructose-6-phosphate. The polypeptide is Glucose-6-phosphate isomerase (Aromatoleum aromaticum (strain DSM 19018 / LMG 30748 / EbN1) (Azoarcus sp. (strain EbN1))).